A 148-amino-acid polypeptide reads, in one-letter code: 3-dehydroquinate dehydratase (148 aa).

Catalysis depends on tyrosine 24, which acts as the Proton acceptor. Substrate-binding residues include asparagine 80, histidine 86, and aspartate 93. The Proton donor role is filled by histidine 106. Substrate-binding positions include 107 to 108 and arginine 117; that span reads IS.

The protein belongs to the type-II 3-dehydroquinase family. As to quaternary structure, homododecamer.

It carries out the reaction 3-dehydroquinate = 3-dehydroshikimate + H2O. It participates in metabolic intermediate biosynthesis; chorismate biosynthesis; chorismate from D-erythrose 4-phosphate and phosphoenolpyruvate: step 3/7. In terms of biological role, catalyzes a trans-dehydration via an enolate intermediate. The protein is 3-dehydroquinate dehydratase of Acidovorax ebreus (strain TPSY) (Diaphorobacter sp. (strain TPSY)).